We begin with the raw amino-acid sequence, 201 residues long: MARYTGPATRKSRRLRVDLVGGDMAFERRPYPPGQAGRARIKESEYLLQLQEKQKARFTYGVLEKQFRRYYAEANRLPGKTGDNLVILLESRLDNVVYRAGLARTRRQARQLVSHGHFTVNGKKINVPSYRVSQYDIIDVREKSQKMIWFEEAQENLLDAVVPAWLQVVPSTLRILVHQLPERAQIDVPLQEQLIVELYSK.

One can recognise an S4 RNA-binding domain in the interval 91–151; the sequence is SRLDNVVYRA…EKSQKMIWFE (61 aa).

It belongs to the universal ribosomal protein uS4 family. As to quaternary structure, part of the 30S ribosomal subunit. Contacts protein S5. The interaction surface between S4 and S5 is involved in control of translational fidelity.

Functionally, one of the primary rRNA binding proteins, it binds directly to 16S rRNA where it nucleates assembly of the body of the 30S subunit. With S5 and S12 plays an important role in translational accuracy. The sequence is that of Small ribosomal subunit protein uS4 from Corynebacterium diphtheriae (strain ATCC 700971 / NCTC 13129 / Biotype gravis).